A 536-amino-acid chain; its full sequence is Heat shock factor protein 2 (536 aa).

Glycyl lysine isopeptide (Lys-Gly) (interchain with G-Cter in SUMO2) cross-links involve residues Lys2 and Lys82. Residues 7-112 (VPAFLSKLWT…LLENIKRKVS (106 aa)) mediate DNA binding. The Nuclear localization signal motif lies at 108-122 (KRKVSSSKPEENKIR). A hydrophobic repeat HR-A/B region spans residues 119–192 (NKIRQEDLTK…VTLVQNNQLV (74 aa)). Glycyl lysine isopeptide (Lys-Gly) (interchain with G-Cter in SUMO2) cross-links involve residues Lys135, Lys139, Lys151, Lys210, Lys218, and Lys237. The Nuclear localization signal signature appears at 195–210 (KRKRPLLLNTNGAQKK). A disordered region spans residues 300 to 337 (QSGEQNEPARESLSSGSDGSSPLMSSAVQLNGSSSLTS). Residues 311 to 325 (SLSSGSDGSSPLMSS) show a composition bias toward low complexity. The span at 326–337 (AVQLNGSSSLTS) shows a compositional bias: polar residues. The hydrophobic repeat HR-C stretch occupies residues 360–385 (LLDYLDSIDCSLEDFQAMLSGRQFSI). The interval 407 to 438 (NNTKSENKGLETTKNNVVQPVSEEGRKSKSKP) is disordered. Basic and acidic residues predominate over residues 429–438 (EEGRKSKSKP).

Belongs to the HSF family. As to quaternary structure, DNA-binding homotrimer in stressed or heat shocked cells, otherwise found as a homodimer.

The protein localises to the cytoplasm. Its subcellular location is the nucleus. Its function is as follows. DNA-binding protein that specifically binds heat shock promoter elements (HSE) and activates transcription. In higher eukaryotes, HSF is unable to bind to the HSE unless the cells are heat shocked. The chain is Heat shock factor protein 2 (HSF2) from Homo sapiens (Human).